Here is a 67-residue protein sequence, read N- to C-terminus: Small ribosomal subunit protein bS21 (67 aa).

This sequence belongs to the bacterial ribosomal protein bS21 family.

The chain is Small ribosomal subunit protein bS21 from Rhodospirillum centenum (strain ATCC 51521 / SW).